We begin with the raw amino-acid sequence, 243 residues long: Zinc import ATP-binding protein ZnuC (243 aa).

Positions 4 to 219 (IAAHHLAVRR…PEYRALFGHG (216 aa)) constitute an ABC transporter domain. Residue 36 to 43 (GPNGSGKS) coordinates ATP.

The protein belongs to the ABC transporter superfamily. Zinc importer (TC 3.A.1.15.5) family. As to quaternary structure, the complex is composed of two ATP-binding proteins (ZnuC), two transmembrane proteins (ZnuB) and a solute-binding protein (ZnuA).

It is found in the cell inner membrane. The enzyme catalyses Zn(2+)(out) + ATP(in) + H2O(in) = Zn(2+)(in) + ADP(in) + phosphate(in) + H(+)(in). Its function is as follows. Part of the ABC transporter complex ZnuABC involved in zinc import. Responsible for energy coupling to the transport system. This Cereibacter sphaeroides (strain ATCC 17023 / DSM 158 / JCM 6121 / CCUG 31486 / LMG 2827 / NBRC 12203 / NCIMB 8253 / ATH 2.4.1.) (Rhodobacter sphaeroides) protein is Zinc import ATP-binding protein ZnuC.